The sequence spans 447 residues: N-succinylarginine dihydrolase (447 aa).

Residues 19 to 28 (AGLSFGNEAS), Asn-110, and 137 to 138 (HR) each bind substrate. Glu-174 is a catalytic residue. Arg-214 contacts substrate. His-250 is an active-site residue. Positions 252 and 365 each coordinate substrate. The active-site Nucleophile is the Cys-371.

This sequence belongs to the succinylarginine dihydrolase family. As to quaternary structure, homodimer.

It carries out the reaction N(2)-succinyl-L-arginine + 2 H2O + 2 H(+) = N(2)-succinyl-L-ornithine + 2 NH4(+) + CO2. It participates in amino-acid degradation; L-arginine degradation via AST pathway; L-glutamate and succinate from L-arginine: step 2/5. Its function is as follows. Catalyzes the hydrolysis of N(2)-succinylarginine into N(2)-succinylornithine, ammonia and CO(2). This is N-succinylarginine dihydrolase from Acinetobacter baumannii (strain ATCC 17978 / DSM 105126 / CIP 53.77 / LMG 1025 / NCDC KC755 / 5377).